Reading from the N-terminus, the 451-residue chain is Alpha-galactosidase (451 aa).

5–71 serves as a coordination point for NAD(+); sequence PKITFIGAGS…ASGKITCHTQ (67 aa). Asparagine 151 contacts substrate. A Mn(2+)-binding site is contributed by cysteine 173. Catalysis depends on histidine 174, which acts as the Proton donor. Histidine 203 provides a ligand contact to Mn(2+). A substrate-binding site is contributed by arginine 287.

The protein belongs to the glycosyl hydrolase 4 family. In terms of assembly, homodimer. NAD(+) serves as cofactor. Requires Mn(2+) as cofactor.

The catalysed reaction is Hydrolysis of terminal, non-reducing alpha-D-galactose residues in alpha-D-galactosides, including galactose oligosaccharides, galactomannans and galactolipids.. This Escherichia coli (strain K12) protein is Alpha-galactosidase (melA).